A 119-amino-acid polypeptide reads, in one-letter code: Large ribosomal subunit protein bL20c (119 aa).

The protein belongs to the bacterial ribosomal protein bL20 family.

Its subcellular location is the plastid. The protein localises to the chloroplast. Its function is as follows. Binds directly to 23S ribosomal RNA and is necessary for the in vitro assembly process of the 50S ribosomal subunit. It is not involved in the protein synthesizing functions of that subunit. The sequence is that of Large ribosomal subunit protein bL20c from Oedogonium cardiacum (Filamentous green alga).